A 317-amino-acid chain; its full sequence is tRNA dimethylallyltransferase (317 aa).

Residue 14–21 participates in ATP binding; it reads GPTAVGKT. Substrate is bound at residue 16–21; it reads TAVGKT. An interaction with substrate tRNA region spans residues 39–42; sequence DSMQ.

The protein belongs to the IPP transferase family. In terms of assembly, monomer. Requires Mg(2+) as cofactor.

The enzyme catalyses adenosine(37) in tRNA + dimethylallyl diphosphate = N(6)-dimethylallyladenosine(37) in tRNA + diphosphate. In terms of biological role, catalyzes the transfer of a dimethylallyl group onto the adenine at position 37 in tRNAs that read codons beginning with uridine, leading to the formation of N6-(dimethylallyl)adenosine (i(6)A). This chain is tRNA dimethylallyltransferase, found in Bacillus cereus (strain Q1).